The chain runs to 47 residues: Exoenzymes regulatory protein AepH (47 aa).

Basic and acidic residues-rich tracts occupy residues 1-17 (MGQEPKGIESRKIQDGH) and 33-47 (TKKEKFSRMSRDANV). Residues 1 to 47 (MGQEPKGIESRKIQDGHVRKKVGRQQGLWVRTTKKEKFSRMSRDANV) form a disordered region.

Its function is as follows. Involved in the control of extracellular enzymes production. Stimulates PEL, PEH, CEL, and PRT production. This chain is Exoenzymes regulatory protein AepH (aepH), found in Pectobacterium carotovorum subsp. carotovorum (Erwinia carotovora subsp. carotovora).